The primary structure comprises 165 residues: Cyclic pyranopterin monophosphate synthase (165 aa).

Substrate-binding positions include 76–78 and 114–115; these read LCH and ME. The active site involves D129.

It belongs to the MoaC family. As to quaternary structure, homohexamer; trimer of dimers.

The enzyme catalyses (8S)-3',8-cyclo-7,8-dihydroguanosine 5'-triphosphate = cyclic pyranopterin phosphate + diphosphate. The protein operates within cofactor biosynthesis; molybdopterin biosynthesis. Catalyzes the conversion of (8S)-3',8-cyclo-7,8-dihydroguanosine 5'-triphosphate to cyclic pyranopterin monophosphate (cPMP). The chain is Cyclic pyranopterin monophosphate synthase from Brucella melitensis biotype 2 (strain ATCC 23457).